The sequence spans 263 residues: UPF0739 protein C1orf74 homolog (263 aa).

The protein belongs to the UPF0739 family.

The protein is UPF0739 protein C1orf74 homolog of Bos taurus (Bovine).